The chain runs to 308 residues: MIRERICACVLALGMLTGFTHAFGSKDAAADGKPLVVTTIGMIADAVKNIAQGDVHLKGLMGPGVDPHLYTATAGDVEWLGNADLILYNGLHLETKMGEVFSKLRGSRLVVAVSETIPVSQRLSLEEAEFDPHVWFDVKLWSYSVKAVYESLCKLLPGKTREFTQRYQAYQQQLDKLDAYVRRKAQSLPAERRVLVTAHDAFGYFSRAYGFEVKGLQGVSTASEASAHDMQELAAFIAQRKLPAIFIESSIPHKNVEALRDAVQARGHVVQIGGELFSDAMGDAGTSEGTYVGMVTHNIDTIVAALAR.

An N-terminal signal peptide occupies residues 1–22 (MIRERICACVLALGMLTGFTHA). Zn(2+) contacts are provided by histidine 68, histidine 133, histidine 199, and aspartate 279.

Belongs to the bacterial solute-binding protein 9 family. As to quaternary structure, monomer.

It localises to the periplasm. In terms of biological role, part of the ATP-binding cassette (ABC) transport system TroABC involved in zinc import. Binds zinc with high affinity and specificity and delivers it to the membrane permease for translocation into the cytoplasm. In Treponema pallidum (strain Nichols), this protein is Zinc-binding protein TroA (troA).